The primary structure comprises 100 residues: Large ribosomal subunit protein eL14 (100 aa).

Belongs to the eukaryotic ribosomal protein eL14 family.

This chain is Large ribosomal subunit protein eL14, found in Aeropyrum pernix (strain ATCC 700893 / DSM 11879 / JCM 9820 / NBRC 100138 / K1).